The following is a 188-amino-acid chain: UPF0301 protein XAC2918 (188 aa).

The protein belongs to the UPF0301 (AlgH) family.

In Xanthomonas axonopodis pv. citri (strain 306), this protein is UPF0301 protein XAC2918.